The following is a 244-amino-acid chain: MIRTDAKDGALVLFSGGQDSATCVAWALERYQTVETLGFDYGQRHRVELECREGVRDALKRRFPQWSHKLGDDHMIDLSVLGAISDTAMTRAIEIETASNGLPNTFVPGRNLLFMTIGAAIAYRRGLRALVGGMCETDFSGYPDCRDDTMKALQVALNLGMDTRFVLETPLMWLDKADTWRLAEQLGGKPLVELIRVETHTCYVGERSELHDWGFGCGECPACKLRKRGFEAYLRGESVTQAPV.

14-24 serves as a coordination point for ATP; that stretch reads FSGGQDSATCV. Zn(2+)-binding residues include Cys202, Cys217, Cys220, and Cys223.

Belongs to the QueC family. Zn(2+) serves as cofactor.

The catalysed reaction is 7-carboxy-7-deazaguanine + NH4(+) + ATP = 7-cyano-7-deazaguanine + ADP + phosphate + H2O + H(+). It participates in purine metabolism; 7-cyano-7-deazaguanine biosynthesis. In terms of biological role, catalyzes the ATP-dependent conversion of 7-carboxy-7-deazaguanine (CDG) to 7-cyano-7-deazaguanine (preQ(0)). In Burkholderia thailandensis (strain ATCC 700388 / DSM 13276 / CCUG 48851 / CIP 106301 / E264), this protein is 7-cyano-7-deazaguanine synthase.